A 123-amino-acid polypeptide reads, in one-letter code: MAKIKARDLRGKKKEELLKQLDDLKNEPSQLRVAKVTGGAASKLTKICVVRKSIARVLTVINQTQKENLRKFYKGKKYKPLDLRPRKTRALRRRLNKHEESLRTKKQQRKDLLYSIRKFAVKA.

It belongs to the universal ribosomal protein uL29 family. As to quaternary structure, component of the large ribosomal subunit.

It localises to the cytoplasm. Its function is as follows. Component of the large ribosomal subunit. The ribosome is a large ribonucleoprotein complex responsible for the synthesis of proteins in the cell. The chain is Large ribosomal subunit protein uL29 (rpl35) from Platichthys flesus (European flounder).